We begin with the raw amino-acid sequence, 101 residues long: Protein RnfH (101 aa).

Belongs to the UPF0125 (RnfH) family.

The protein is Protein RnfH of Coxiella burnetii (strain RSA 331 / Henzerling II).